We begin with the raw amino-acid sequence, 524 residues long: Sexual development regulator velC (524 aa).

Disordered regions lie at residues 114–195 (NRVL…PVHS), 322–349 (PGSG…MSSY), 380–413 (VDEE…HRFR), and 503–524 (GMGK…ARVE). 2 stretches are compositionally biased toward polar residues: residues 131 to 153 (TTGS…ENAG) and 178 to 195 (LDSQ…PVHS). Residues 248-500 (SSSSRYRLFI…ELGFVELKTR (253 aa)) enclose the Velvet domain. Residues 393-402 (PSSTDDSTYD) show a composition bias toward polar residues.

The protein belongs to the velvet family. VelC subfamily. As to quaternary structure, interacts with vosA.

The protein resides in the nucleus. Velvet-domain-containing protein that acts as a positive regulator of sexual development. Positively regulates the production of the sexual fruiting bodies called cleistothecia. In Emericella nidulans (strain FGSC A4 / ATCC 38163 / CBS 112.46 / NRRL 194 / M139) (Aspergillus nidulans), this protein is Sexual development regulator velC.